Consider the following 484-residue polypeptide: BAHD acyltransferase DCR (484 aa).

His168 serves as the catalytic Proton acceptor. The interval 211–233 is disordered; it reads LDLTAPKDPNETSNGEDAANPTV. The active-site Proton acceptor is Asp394. Positions 452–484 are disordered; the sequence is EEEEDDGKKLTNGNGHVNGNGNGYVNGNGNGFV. The segment covering 467 to 484 has biased composition (gly residues); sequence HVNGNGNGYVNGNGNGFV.

The protein belongs to the plant acyltransferase family. In terms of tissue distribution, expressed in root caps and lateral root emerging sites, in trichomes, in epidermis in stems, sepals and anther filaments, and in pollen grains and torpedo stage seeds.

Its subcellular location is the cytoplasm. It is found in the cytosol. In terms of biological role, required for incorporation of 9(10),16-dihydroxy-hexadecanoic acid into cutin. The sequence is that of BAHD acyltransferase DCR (DCR) from Arabidopsis thaliana (Mouse-ear cress).